The sequence spans 233 residues: uncharacterized protein (233 aa).

Over residues 1–10 (MSSKLSKKKL) the composition is skewed to basic residues. A disordered region spans residues 1–90 (MSSKLSKKKL…KRQKGKNNDR (90 aa)). Positions 11 to 56 (KSLEYRSKKFDKKSQSLEEHEKKVQQKNEELEKKAADKISRDELPE) are enriched in basic and acidic residues. The segment covering 76 to 85 (KTLKSKRQKG) has biased composition (basic residues). In terms of domain architecture, RRM spans 92–171 (VILFVGNLPK…RKINIELTAG (80 aa)). Basic and acidic residues-rich tracts occupy residues 194–216 (MRQR…KAVA) and 224–233 (IHPDRLRLLQ). A disordered region spans residues 194–233 (MRQRVASEEQQAGEEKMARKAVADEGLESGIHPDRLRLLQ).

It is found in the nucleus. The protein resides in the nucleolus. This is an uncharacterized protein from Schizosaccharomyces pombe (strain 972 / ATCC 24843) (Fission yeast).